The chain runs to 305 residues: N-acetylmuramic acid 6-phosphate etherase (305 aa).

Residues 1–24 (MTTPPSSPLSDPRRTEGVHPTHTD) are disordered. Over residues 11–24 (DPRRTEGVHPTHTD) the composition is skewed to basic and acidic residues. The SIS domain maps to 62 to 225 (ALPRLERGGR…SSALMVRLGK (164 aa)). Glu90 acts as the Proton donor in catalysis. Glu121 is a catalytic residue.

The protein belongs to the GCKR-like family. MurNAc-6-P etherase subfamily. Homodimer.

The catalysed reaction is N-acetyl-D-muramate 6-phosphate + H2O = N-acetyl-D-glucosamine 6-phosphate + (R)-lactate. It participates in amino-sugar metabolism; N-acetylmuramate degradation. Functionally, specifically catalyzes the cleavage of the D-lactyl ether substituent of MurNAc 6-phosphate, producing GlcNAc 6-phosphate and D-lactate. This is N-acetylmuramic acid 6-phosphate etherase from Deinococcus geothermalis (strain DSM 11300 / CIP 105573 / AG-3a).